The following is a 104-amino-acid chain: Large ribosomal subunit protein uL24 (104 aa).

It belongs to the universal ribosomal protein uL24 family. In terms of assembly, part of the 50S ribosomal subunit.

Functionally, one of two assembly initiator proteins, it binds directly to the 5'-end of the 23S rRNA, where it nucleates assembly of the 50S subunit. In terms of biological role, one of the proteins that surrounds the polypeptide exit tunnel on the outside of the subunit. This Dichelobacter nodosus (strain VCS1703A) protein is Large ribosomal subunit protein uL24.